A 65-amino-acid polypeptide reads, in one-letter code: Conotoxin TsMRCL-05 (65 aa).

The first 22 residues, 1–22, serve as a signal peptide directing secretion; it reads MHCLPVLVILLLLIASTPSVDA. The propeptide occupies 23 to 52; it reads RPNPKDDVPLASFHGAVNAKRYLRTLWNSR. I64 bears the Isoleucine amide mark.

This sequence belongs to the conotoxin T superfamily. In terms of processing, contains 2 disulfide bonds that can be either 'C1-C3, C2-C4' or 'C1-C4, C2-C3', since these disulfide connectivities have been observed for conotoxins with cysteine framework V (for examples, see AC P0DQQ7 and AC P81755). In terms of tissue distribution, expressed by the venom duct.

It is found in the secreted. The sequence is that of Conotoxin TsMRCL-05 from Conus tessulatus (Tessellate cone).